The chain runs to 390 residues: Bifunctional enzyme IspD/IspF (390 aa).

A 2-C-methyl-D-erythritol 4-phosphate cytidylyltransferase region spans residues 1-229 (MAAGRGERAG…RQDHAVFPDI (229 aa)). The interval 230 to 390 (RTGNGYDVHS…TVIYPGEVPE (161 aa)) is 2-C-methyl-D-erythritol 2,4-cyclodiphosphate synthase. A divalent metal cation-binding residues include Asp-236 and His-238. Residues 236–238 (DVH) and 262–263 (HS) contribute to the 4-CDP-2-C-methyl-D-erythritol 2-phosphate site. His-270 contacts a divalent metal cation. Residues 284 to 286 (DIG), 360 to 363 (TTNE), Phe-367, and Arg-370 each bind 4-CDP-2-C-methyl-D-erythritol 2-phosphate.

It in the N-terminal section; belongs to the IspD/TarI cytidylyltransferase family. IspD subfamily. The protein in the C-terminal section; belongs to the IspF family. The cofactor is a divalent metal cation.

It catalyses the reaction 2-C-methyl-D-erythritol 4-phosphate + CTP + H(+) = 4-CDP-2-C-methyl-D-erythritol + diphosphate. The catalysed reaction is 4-CDP-2-C-methyl-D-erythritol 2-phosphate = 2-C-methyl-D-erythritol 2,4-cyclic diphosphate + CMP. Its pathway is isoprenoid biosynthesis; isopentenyl diphosphate biosynthesis via DXP pathway; isopentenyl diphosphate from 1-deoxy-D-xylulose 5-phosphate: step 2/6. It participates in isoprenoid biosynthesis; isopentenyl diphosphate biosynthesis via DXP pathway; isopentenyl diphosphate from 1-deoxy-D-xylulose 5-phosphate: step 4/6. In terms of biological role, bifunctional enzyme that catalyzes the formation of 4-diphosphocytidyl-2-C-methyl-D-erythritol from CTP and 2-C-methyl-D-erythritol 4-phosphate (MEP) (IspD), and catalyzes the conversion of 4-diphosphocytidyl-2-C-methyl-D-erythritol 2-phosphate (CDP-ME2P) to 2-C-methyl-D-erythritol 2,4-cyclodiphosphate (ME-CPP) with a corresponding release of cytidine 5-monophosphate (CMP) (IspF). In Brucella abortus biovar 1 (strain 9-941), this protein is Bifunctional enzyme IspD/IspF.